Consider the following 79-residue polypeptide: MPKSDIHPTWYPDAKVICNGEVVMTTGATQPEIHVDVWSGNHPFFTGTQKILDTEGRVDRFMKKYGMGSTKGKDDDASS.

The protein belongs to the bacterial ribosomal protein bL31 family. Type A subfamily. As to quaternary structure, part of the 50S ribosomal subunit.

Functionally, binds the 23S rRNA. This chain is Large ribosomal subunit protein bL31, found in Synechococcus sp. (strain CC9902).